The primary structure comprises 385 residues: Polyketide synthase 4 (385 aa).

Cysteine 157 is an active-site residue.

Belongs to the thiolase-like superfamily. Chalcone/stilbene synthases family. In terms of tissue distribution, expressed in glandular trichomes.

The protein resides in the cytoplasm. Polyketide synthase responsible for the biosynthesis of secondary metabolites. The protein is Polyketide synthase 4 (PKSG4) of Cannabis sativa (Hemp).